The following is a 156-amino-acid chain: Small ribosomal subunit protein uS7 (156 aa).

The protein belongs to the universal ribosomal protein uS7 family. Part of the 30S ribosomal subunit. Contacts proteins S9 and S11.

In terms of biological role, one of the primary rRNA binding proteins, it binds directly to 16S rRNA where it nucleates assembly of the head domain of the 30S subunit. Is located at the subunit interface close to the decoding center, probably blocks exit of the E-site tRNA. The polypeptide is Small ribosomal subunit protein uS7 (Parasynechococcus marenigrum (strain WH8102)).